A 598-amino-acid polypeptide reads, in one-letter code: MQTFNADLAIIGAGGAGLRAAIAAAEANPQLKIALISKVYPMRSHTVAAEGGSAAVTQDHDSFDFHFHDTVAGGDWLCEQDVVDQFVQSCPREMTQLEQWGCPWSRKPDGSVNVRRFGGMKIERTWFAADKTGFHMLHTLFQTSLKYPQIQRFDEHFVLDILVDDGQARGLVAINMMEGTLVQIRANAVIMATGGAGRVYRYNTNGGIVTGDGMGMAFRHGVPLRDMEFVQYHPTGLPGSGILMTEGCRGEGGIMVNKDGYRYLQDYGMGPETPLGQPKNKYMELGPRDKVSQAFWHEWRAGRTISTPLGDVVYLDLRHLGEKKLKERLPFICELAQAYVGVDPVKEPIPIRPTAHYTMGGIETDQQCETRIKGLFAAGECSSVGLHGANRLGSNSLAELVVFGRIAGEHATQRSLESAPANASALDAQARDVEQRLHTLMKQEGTESWAKIRDEMGISMEEGCGIYRTTELMQKTLDKLAELKERFKRVKITDHSSVFNTDLLYTIELGHSLDVAQCMAHSAINRKESRGAHQRLDEGCTERDDVNFLKHTLAFYNPEGAPRLEYSDVKITKLPPAKRVYGGEADAQEKSDKEQANG.

Residues 12 to 16, 36 to 38, 44 to 52, 156 to 158, and Asp212 contribute to the FAD site; these read GAGGA, ISK, SHTVAAEGG, and HFV. The residue at position 45 (His45) is a Tele-8alpha-FAD histidine. Catalysis depends on residues His233 and Arg249. FAD is bound by residues 356–357, Glu380, and 391–397; these read HY and RLGSNSL. A disordered region spans residues 577–598; sequence AKRVYGGEADAQEKSDKEQANG. Positions 587–598 are enriched in basic and acidic residues; it reads AQEKSDKEQANG.

This sequence belongs to the FAD-dependent oxidoreductase 2 family. FRD/SDH subfamily. As to quaternary structure, part of an enzyme complex containing four subunits: a flavoprotein (FrdA), an iron-sulfur protein (FrdB), and two hydrophobic anchor proteins (FrdC and FrdD). Interacts with SdhE. It depends on FAD as a cofactor.

The protein localises to the cell inner membrane. The enzyme catalyses a quinone + succinate = fumarate + a quinol. The catalysed reaction is a menaquinone + succinate = a menaquinol + fumarate. Its function is as follows. Two distinct, membrane-bound, FAD-containing enzymes are responsible for the catalysis of fumarate and succinate interconversion; the fumarate reductase is used in anaerobic growth, and the succinate dehydrogenase is used in aerobic growth. This is Fumarate reductase flavoprotein subunit from Serratia sp. (strain ATCC 39006) (Prodigiosinella confusarubida).